Consider the following 330-residue polypeptide: DNA-directed RNA polymerase subunit alpha (330 aa).

The alpha N-terminal domain (alpha-NTD) stretch occupies residues 1–237; the sequence is MYTEINEMLT…RQLHAFVDMK (237 aa). The alpha C-terminal domain (alpha-CTD) stretch occupies residues 251 to 330; that stretch reads FDPVLLRSVD…ENWPPASLGE (80 aa).

This sequence belongs to the RNA polymerase alpha chain family. In terms of assembly, homodimer. The RNAP catalytic core consists of 2 alpha, 1 beta, 1 beta' and 1 omega subunit. When a sigma factor is associated with the core the holoenzyme is formed, which can initiate transcription.

The enzyme catalyses RNA(n) + a ribonucleoside 5'-triphosphate = RNA(n+1) + diphosphate. In terms of biological role, DNA-dependent RNA polymerase catalyzes the transcription of DNA into RNA using the four ribonucleoside triphosphates as substrates. The chain is DNA-directed RNA polymerase subunit alpha from Legionella pneumophila (strain Corby).